A 220-amino-acid polypeptide reads, in one-letter code: MAEQPAGQAGTTDNRDARGDREGRRRDSGRGSRERDGEKSNYLERVVAINRVSKVVKGGRRFSFTALVIVGDGNGMVGVGYGKAKEVPAAIAKGVEEARKSFFRVPLIGGTITHPVQGEAAAGVVLLRPASPGTGVIAGGAARAVLECAGVHDILAKSLGSDNAINVVHATVAALKLLQRPEEVAARRGLPIEDVAPAGMLKARRKSEALAASVLPDRTI.

Positions Met-1–Lys-39 are disordered. Basic and acidic residues predominate over residues Asp-13 to Lys-39. The region spanning Tyr-42–Val-105 is the S5 DRBM domain.

It belongs to the universal ribosomal protein uS5 family. In terms of assembly, part of the 30S ribosomal subunit. Contacts proteins S4 and S8.

With S4 and S12 plays an important role in translational accuracy. Functionally, located at the back of the 30S subunit body where it stabilizes the conformation of the head with respect to the body. The chain is Small ribosomal subunit protein uS5 from Mycobacterium bovis (strain ATCC BAA-935 / AF2122/97).